The chain runs to 256 residues: D-aminoacyl-tRNA deacylase (256 aa).

It belongs to the DtdA deacylase family. As to quaternary structure, monomer. Zn(2+) serves as cofactor.

It carries out the reaction a D-aminoacyl-tRNA + H2O = a tRNA + a D-alpha-amino acid + H(+). The enzyme catalyses glycyl-tRNA(Ala) + H2O = tRNA(Ala) + glycine + H(+). Its function is as follows. D-aminoacyl-tRNA deacylase with broad substrate specificity. By recycling D-aminoacyl-tRNA to D-amino acids and free tRNA molecules, this enzyme counteracts the toxicity associated with the formation of D-aminoacyl-tRNA entities in vivo. The polypeptide is D-aminoacyl-tRNA deacylase (Thermoplasma acidophilum (strain ATCC 25905 / DSM 1728 / JCM 9062 / NBRC 15155 / AMRC-C165)).